Reading from the N-terminus, the 575-residue chain is Carboxylesterase 5A (575 aa).

The signal sequence occupies residues 1-20 (MSGNWVHPGQILIWAIWVLA). C94 and C121 are disulfide-bonded. The active-site Acyl-ester intermediate is the S226. Residue N281 is glycosylated (N-linked (GlcNAc...) asparagine). The active-site Charge relay system is E345. An N-linked (GlcNAc...) asparagine glycan is attached at N363. The active-site Charge relay system is H454. 2 N-linked (GlcNAc...) asparagine glycosylation sites follow: N513 and N524.

This sequence belongs to the type-B carboxylesterase/lipase family. In terms of processing, N-glycosylated.

It localises to the secreted. The enzyme catalyses a carboxylic ester + H2O = an alcohol + a carboxylate + H(+). Functionally, involved in the detoxification of xenobiotics and in the activation of ester and amide prodrugs. The chain is Carboxylesterase 5A (CES5A) from Homo sapiens (Human).